The sequence spans 188 residues: Elongation factor P (188 aa).

N6-(3,6-diaminohexanoyl)-5-hydroxylysine is present on Lys34.

The protein belongs to the elongation factor P family. May be beta-lysylated on the epsilon-amino group of Lys-34 by the combined action of EpmA and EpmB, and then hydroxylated on the C5 position of the same residue by EpmC (if this protein is present). Lysylation is critical for the stimulatory effect of EF-P on peptide-bond formation. The lysylation moiety may extend toward the peptidyltransferase center and stabilize the terminal 3-CCA end of the tRNA. Hydroxylation of the C5 position on Lys-34 may allow additional potential stabilizing hydrogen-bond interactions with the P-tRNA.

The protein resides in the cytoplasm. It participates in protein biosynthesis; polypeptide chain elongation. Involved in peptide bond synthesis. Alleviates ribosome stalling that occurs when 3 or more consecutive Pro residues or the sequence PPG is present in a protein, possibly by augmenting the peptidyl transferase activity of the ribosome. Modification of Lys-34 is required for alleviation. The chain is Elongation factor P from Photorhabdus laumondii subsp. laumondii (strain DSM 15139 / CIP 105565 / TT01) (Photorhabdus luminescens subsp. laumondii).